The primary structure comprises 128 residues: Phosphoribosyl-AMP cyclohydrolase (128 aa).

Asp77 lines the Mg(2+) pocket. Cys78 contributes to the Zn(2+) binding site. Mg(2+) is bound by residues Asp79 and Asp81. Positions 95 and 102 each coordinate Zn(2+).

It belongs to the PRA-CH family. In terms of assembly, homodimer. Requires Mg(2+) as cofactor. Zn(2+) serves as cofactor.

Its subcellular location is the cytoplasm. It carries out the reaction 1-(5-phospho-beta-D-ribosyl)-5'-AMP + H2O = 1-(5-phospho-beta-D-ribosyl)-5-[(5-phospho-beta-D-ribosylamino)methylideneamino]imidazole-4-carboxamide. It participates in amino-acid biosynthesis; L-histidine biosynthesis; L-histidine from 5-phospho-alpha-D-ribose 1-diphosphate: step 3/9. Functionally, catalyzes the hydrolysis of the adenine ring of phosphoribosyl-AMP. This Methylococcus capsulatus (strain ATCC 33009 / NCIMB 11132 / Bath) protein is Phosphoribosyl-AMP cyclohydrolase.